A 377-amino-acid chain; its full sequence is TelA-like protein SSP1345 (377 aa).

Residues 1–18 (MAREQDSINSHPLDKYID) show a composition bias toward basic and acidic residues. A disordered region spans residues 1–39 (MAREQDSINSHPLDKYIDENSANESEIIKSSSQFSHEDQ). Positions 20 to 34 (NSANESEIIKSSSQF) are enriched in polar residues.

This sequence belongs to the TelA family.

In Staphylococcus saprophyticus subsp. saprophyticus (strain ATCC 15305 / DSM 20229 / NCIMB 8711 / NCTC 7292 / S-41), this protein is TelA-like protein SSP1345.